We begin with the raw amino-acid sequence, 657 residues long: MSEHTTSQTQVTVTLPDGESRSFPFGTTGYDIARSIGKKLAQDALAVVINGRAQDLDSPVSEDASIEIVTFDHPLGKEIFWHSASHIMAHAIEELFPGSRFGAGPAIEQGFYYDIASSHRFTESDLHDIETRMIEIGRRAIDVRREELSRQAAIDFFSSTRKDPYKVEILEDTLKDTPTVSIYHQGEFADLCTGPHLPNTSKLKAVKLTNISASFWRGDSSRESMQRIYGIAFPSEKLLKQHLAHIEEAKKRDHRKLGAELELFMLSPEVGSGLPIWLPKGAIVRNELESFLREEQRKRGYVPVYTPHIGNIGLYKRSGHYPYYSESQFPPLTYTDDLGREEQYLLKPMNCPHHHMIYSSKLRSYRDLPIRLTEFGTVYRHEQSGELNGLIRARGFTQDDSHIYCRPDQLVDEICNAIDLTKFVFATLGFDDIQIRLSLHDPENQDKYGGTKEVWEQAEKDVREAADRMNIDYFTGIGEASFYGPKIDFIVRDAIGRKWQLGTVQVDYVMPERFDLSYIGSDGQPHRPVIIHRAPFGSMERFIGVLIEHTGGNFPLWLAPVQIAVLPITDEVHDYAVQVRDTLHAAGMRVELDTRSEKIGKKIRESEVAKIPYMVIIGQKEAAAGEVSLRRHREGDQGNMTVEELKEKLAKEINDKS.

One can recognise a TGS domain in the interval 7–70 (SQTQVTVTLP…SEDASIEIVT (64 aa)). The interval 253–555 (DHRKLGAELE…LIEHTGGNFP (303 aa)) is catalytic. Zn(2+)-binding residues include C351, H402, and H532.

It belongs to the class-II aminoacyl-tRNA synthetase family. Homodimer. Zn(2+) serves as cofactor.

It localises to the cytoplasm. The enzyme catalyses tRNA(Thr) + L-threonine + ATP = L-threonyl-tRNA(Thr) + AMP + diphosphate + H(+). Functionally, catalyzes the attachment of threonine to tRNA(Thr) in a two-step reaction: L-threonine is first activated by ATP to form Thr-AMP and then transferred to the acceptor end of tRNA(Thr). Also edits incorrectly charged L-seryl-tRNA(Thr). The chain is Threonine--tRNA ligase from Prosthecochloris aestuarii (strain DSM 271 / SK 413).